The sequence spans 156 residues: uncharacterized protein (156 aa).

This is an uncharacterized protein from Bacillus subtilis (strain 168).